The chain runs to 260 residues: Beta-lactamase SHV-6 (260 aa).

The N-terminal stretch at Leu1–Ala11 is a signal peptide. The Acyl-ester intermediate role is filled by Ser56. Cys63 and Cys109 are disulfide-bonded. The active-site Proton acceptor is the Glu154. A substrate-binding site is contributed by Lys220–Gly222.

It belongs to the class-A beta-lactamase family.

The catalysed reaction is a beta-lactam + H2O = a substituted beta-amino acid. In terms of biological role, SHV enzymes hydrolyze broad spectrum cephalosporins notably cefotaxime and ceftazidime. This Klebsiella pneumoniae protein is Beta-lactamase SHV-6 (bla).